A 140-amino-acid chain; its full sequence is Glycine cleavage system H protein (140 aa).

The Lipoyl-binding domain occupies 22–104 (EVVIGITRFA…YGKGWMLRLK (83 aa)). The residue at position 63 (Lys63) is an N6-lipoyllysine.

The protein belongs to the GcvH family. As to quaternary structure, the glycine cleavage system is composed of four proteins: P, T, L and H. It depends on (R)-lipoate as a cofactor.

The glycine cleavage system catalyzes the degradation of glycine. The H protein shuttles the methylamine group of glycine from the P protein to the T protein. In Magnetococcus marinus (strain ATCC BAA-1437 / JCM 17883 / MC-1), this protein is Glycine cleavage system H protein.